The primary structure comprises 504 residues: Anaerobic nitric oxide reductase transcription regulator NorR (504 aa).

D57 is modified (4-aspartylphosphate). The Sigma-54 factor interaction domain occupies 187 to 416 (MIGLSPGMTQ…LEHAIHRAVV (230 aa)). Residues 215-222 (GETGTGKE) and 278-287 (ADNGTLFLDE) each bind ATP. The H-T-H motif DNA-binding region spans 479-498 (WAACARMLETDVANLHRLAK).

It functions in the pathway nitrogen metabolism; nitric oxide reduction. In terms of biological role, required for the expression of anaerobic nitric oxide (NO) reductase, acts as a transcriptional activator for at least the norVW operon. Activation also requires sigma-54. The sequence is that of Anaerobic nitric oxide reductase transcription regulator NorR from Escherichia coli (strain SE11).